The primary structure comprises 391 residues: Protein-glutamate methylesterase/protein-glutamine glutaminase (391 aa).

One can recognise a Response regulatory domain in the interval 4 to 121 (KVLVVDDSSF…ARNNEDAIKL (118 aa)). D55 carries the post-translational modification 4-aspartylphosphate. The 195-residue stretch at 197-391 (SGKHYQLVAI…IRLKTEVGCG (195 aa)) folds into the CheB-type methylesterase domain. Catalysis depends on residues S209, H236, and D333.

Belongs to the CheB family. In terms of processing, phosphorylated by CheA. Phosphorylation of the N-terminal regulatory domain activates the methylesterase activity.

Its subcellular location is the cytoplasm. The catalysed reaction is [protein]-L-glutamate 5-O-methyl ester + H2O = L-glutamyl-[protein] + methanol + H(+). It carries out the reaction L-glutaminyl-[protein] + H2O = L-glutamyl-[protein] + NH4(+). Involved in chemotaxis. Part of a chemotaxis signal transduction system that modulates chemotaxis in response to various stimuli. Catalyzes the demethylation of specific methylglutamate residues introduced into the chemoreceptors (methyl-accepting chemotaxis proteins or MCP) by CheR. Also mediates the irreversible deamidation of specific glutamine residues to glutamic acid. This is Protein-glutamate methylesterase/protein-glutamine glutaminase from Pseudoalteromonas translucida (strain TAC 125).